The sequence spans 912 residues: LPS-assembly protein LptD (912 aa).

Positions 1-27 (MLYSPLYQSIRLILFGALGLSSLTVSA) are cleaved as a signal peptide.

Belongs to the LptD family. As to quaternary structure, component of the lipopolysaccharide transport and assembly complex. Interacts with LptE and LptA.

The protein localises to the cell outer membrane. In terms of biological role, together with LptE, is involved in the assembly of lipopolysaccharide (LPS) at the surface of the outer membrane. The chain is LPS-assembly protein LptD from Psychrobacter arcticus (strain DSM 17307 / VKM B-2377 / 273-4).